The following is a 180-amino-acid chain: Ribulose bisphosphate carboxylase small subunit, chloroplastic (180 aa).

A chloroplast-targeting transit peptide spans 1–57; it reads MVSSMMVSSAATFTRASPAQSSMVAPFTGLKSASAFPVTRKPNADLSHLPSNGGRVQ.

The protein belongs to the RuBisCO small chain family. As to quaternary structure, heterohexadecamer of 8 large and 8 small subunits.

Its subcellular location is the plastid. The protein localises to the chloroplast. RuBisCO catalyzes two reactions: the carboxylation of D-ribulose 1,5-bisphosphate, the primary event in carbon dioxide fixation, as well as the oxidative fragmentation of the pentose substrate. Both reactions occur simultaneously and in competition at the same active site. Although the small subunit is not catalytic it is essential for maximal activity. The polypeptide is Ribulose bisphosphate carboxylase small subunit, chloroplastic (Musa acuminata (Banana)).